A 141-amino-acid chain; its full sequence is Large ribosomal subunit protein uL11 (141 aa).

The protein belongs to the universal ribosomal protein uL11 family. In terms of assembly, part of the ribosomal stalk of the 50S ribosomal subunit. Interacts with L10 and the large rRNA to form the base of the stalk. L10 forms an elongated spine to which L12 dimers bind in a sequential fashion forming a multimeric L10(L12)X complex. In terms of processing, one or more lysine residues are methylated.

Forms part of the ribosomal stalk which helps the ribosome interact with GTP-bound translation factors. The polypeptide is Large ribosomal subunit protein uL11 (Helicobacter hepaticus (strain ATCC 51449 / 3B1)).